Here is a 234-residue protein sequence, read N- to C-terminus: 2-C-methyl-D-erythritol 4-phosphate cytidylyltransferase (234 aa).

Belongs to the IspD/TarI cytidylyltransferase family. IspD subfamily.

The enzyme catalyses 2-C-methyl-D-erythritol 4-phosphate + CTP + H(+) = 4-CDP-2-C-methyl-D-erythritol + diphosphate. It participates in isoprenoid biosynthesis; isopentenyl diphosphate biosynthesis via DXP pathway; isopentenyl diphosphate from 1-deoxy-D-xylulose 5-phosphate: step 2/6. In terms of biological role, catalyzes the formation of 4-diphosphocytidyl-2-C-methyl-D-erythritol from CTP and 2-C-methyl-D-erythritol 4-phosphate (MEP). This chain is 2-C-methyl-D-erythritol 4-phosphate cytidylyltransferase, found in Photobacterium profundum (strain SS9).